A 464-amino-acid chain; its full sequence is Cysteine--tRNA ligase (464 aa).

Cys-28 is a Zn(2+) binding site. A 'HIGH' region motif is present at residues 30-40; it reads VTVYDFCHIGH. 3 residues coordinate Zn(2+): Cys-209, His-234, and Glu-238. The 'KMSKS' region motif lies at 266–270; it reads KMSKS. An ATP-binding site is contributed by Lys-269.

The protein belongs to the class-I aminoacyl-tRNA synthetase family. Monomer. Zn(2+) serves as cofactor.

It is found in the cytoplasm. It carries out the reaction tRNA(Cys) + L-cysteine + ATP = L-cysteinyl-tRNA(Cys) + AMP + diphosphate. The polypeptide is Cysteine--tRNA ligase (cysS) (Buchnera aphidicola subsp. Acyrthosiphon pisum (strain APS) (Acyrthosiphon pisum symbiotic bacterium)).